A 354-amino-acid chain; its full sequence is NADH-quinone oxidoreductase subunit H (354 aa).

8 helical membrane passes run 22–42 (ILIR…YLIL), 91–111 (YLIA…VIPF), 124–144 (LLYV…AGWA), 168–188 (MGFA…SAIV), 203–223 (ILSW…ISGV), 255–275 (LFFL…ALMF), 291–311 (IPGF…FIWI), and 326–346 (LGWK…AIWI).

Belongs to the complex I subunit 1 family. NDH-1 is composed of 14 different subunits. Subunits NuoA, H, J, K, L, M, N constitute the membrane sector of the complex.

It is found in the cell inner membrane. The catalysed reaction is a quinone + NADH + 5 H(+)(in) = a quinol + NAD(+) + 4 H(+)(out). In terms of biological role, NDH-1 shuttles electrons from NADH, via FMN and iron-sulfur (Fe-S) centers, to quinones in the respiratory chain. The immediate electron acceptor for the enzyme in this species is believed to be ubiquinone. Couples the redox reaction to proton translocation (for every two electrons transferred, four hydrogen ions are translocated across the cytoplasmic membrane), and thus conserves the redox energy in a proton gradient. This subunit may bind ubiquinone. This Cupriavidus necator (strain ATCC 17699 / DSM 428 / KCTC 22496 / NCIMB 10442 / H16 / Stanier 337) (Ralstonia eutropha) protein is NADH-quinone oxidoreductase subunit H.